Reading from the N-terminus, the 390-residue chain is Sister chromatid cohesion protein DCC1 (390 aa).

Belongs to the DCC1 family. As to quaternary structure, component of the ctf18-RFC complex which consists of ctf18, ctf8, dscc1 and the RFC complex.

The protein localises to the nucleus. In terms of biological role, loads pcna onto primed templates regulating velocity, spacing and restart activity of replication forks. May couple DNA replication to sister chromatid cohesion. This Xenopus laevis (African clawed frog) protein is Sister chromatid cohesion protein DCC1 (dscc1).